An 803-amino-acid polypeptide reads, in one-letter code: Translation initiation factor IF-2 (803 aa).

Disordered regions lie at residues Pro-95–Glu-125 and Glu-138–Glu-178. The span at Val-111–Asn-121 shows a compositional bias: polar residues. Residues Glu-138–Lys-155 show a composition bias toward basic and acidic residues. Basic residues predominate over residues Lys-156–Lys-167. The span at Pro-168–Glu-178 shows a compositional bias: basic and acidic residues. The tr-type G domain occupies Pro-302–Lys-471. The tract at residues Gly-311 to Thr-318 is G1. Residue Gly-311–Thr-318 participates in GTP binding. The interval Gly-336–His-340 is G2. Positions Asp-357–Gly-360 are G3. GTP contacts are provided by residues Asp-357–His-361 and Asn-411–Asp-414. The segment at Asn-411–Asp-414 is G4. Residues Ser-447–Lys-449 are G5.

This sequence belongs to the TRAFAC class translation factor GTPase superfamily. Classic translation factor GTPase family. IF-2 subfamily.

It is found in the cytoplasm. One of the essential components for the initiation of protein synthesis. Protects formylmethionyl-tRNA from spontaneous hydrolysis and promotes its binding to the 30S ribosomal subunits. Also involved in the hydrolysis of GTP during the formation of the 70S ribosomal complex. This chain is Translation initiation factor IF-2, found in Coxiella burnetii (strain RSA 331 / Henzerling II).